Consider the following 276-residue polypeptide: Exosome complex component Rrp42 (276 aa).

The protein belongs to the RNase PH family. Rrp42 subfamily. Component of the archaeal exosome complex. Forms a hexameric ring-like arrangement composed of 3 Rrp41-Rrp42 heterodimers. The hexameric ring associates with a trimer of Rrp4 and/or Csl4 subunits.

The protein localises to the cytoplasm. In terms of biological role, non-catalytic component of the exosome, which is a complex involved in RNA degradation. Contributes to the structuring of the Rrp41 active site. This is Exosome complex component Rrp42 from Aeropyrum pernix (strain ATCC 700893 / DSM 11879 / JCM 9820 / NBRC 100138 / K1).